Reading from the N-terminus, the 814-residue chain is Acyl-coenzyme A dehydrogenase (814 aa).

Glu497 acts as the Proton acceptor in catalysis.

This sequence belongs to the acyl-CoA dehydrogenase family. FAD is required as a cofactor.

It catalyses the reaction a medium-chain 2,3-saturated fatty acyl-CoA + oxidized [electron-transfer flavoprotein] + H(+) = a medium-chain (2E)-enoyl-CoA + reduced [electron-transfer flavoprotein]. The catalysed reaction is a long-chain 2,3-saturated fatty acyl-CoA + oxidized [electron-transfer flavoprotein] + H(+) = a long-chain (2E)-enoyl-CoA + reduced [electron-transfer flavoprotein]. Its pathway is lipid metabolism; fatty acid beta-oxidation. Catalyzes the dehydrogenation of acyl-coenzymes A (acyl-CoAs) to 2-enoyl-CoAs, the first step of the beta-oxidation cycle of fatty acid degradation. Is required for E.coli to utilize dodecanoate or oleate as the sole carbon and energy source for growth. The protein is Acyl-coenzyme A dehydrogenase of Escherichia coli (strain K12).